The chain runs to 899 residues: Conserved oligomeric Golgi complex subunit 3 (899 aa).

Belongs to the COG3 family. Component of the conserved oligomeric Golgi complex which is composed of eight different subunits and is required for normal Golgi morphology and localization.

It is found in the golgi apparatus membrane. Functionally, involved in ER-Golgi transport. The chain is Conserved oligomeric Golgi complex subunit 3 from Aedes aegypti (Yellowfever mosquito).